A 302-amino-acid polypeptide reads, in one-letter code: Probable alpha-L-glutamate ligase (302 aa).

The ATP-grasp domain maps to L104–E287. Residues K141, E178–Y179, D187, and R211–N213 each bind ATP. Residues D248, E260, and N262 each coordinate Mg(2+). The Mn(2+) site is built by D248, E260, and N262.

This sequence belongs to the RimK family. It depends on Mg(2+) as a cofactor. Mn(2+) serves as cofactor.

This is Probable alpha-L-glutamate ligase from Chromohalobacter salexigens (strain ATCC BAA-138 / DSM 3043 / CIP 106854 / NCIMB 13768 / 1H11).